The chain runs to 70 residues: Large ribosomal subunit protein bL32c (70 aa).

Disordered regions lie at residues Met-1–Arg-20 and Asn-51–Pro-70. Residues Asp-52–Lys-61 are compositionally biased toward polar residues.

This sequence belongs to the bacterial ribosomal protein bL32 family.

It is found in the plastid. It localises to the chloroplast. The chain is Large ribosomal subunit protein bL32c (rpl32) from Pinus thunbergii (Japanese black pine).